The chain runs to 434 residues: Chaperone SurA (434 aa).

A signal peptide spans 1–22 (MKKWKSSLLGIAIWSLAASSMA). 2 consecutive PpiC domains span residues 173–274 (TVQF…KVND) and 283–383 (VTEV…EVLD).

It is found in the periplasm. The enzyme catalyses [protein]-peptidylproline (omega=180) = [protein]-peptidylproline (omega=0). Functionally, chaperone involved in the correct folding and assembly of outer membrane proteins. Recognizes specific patterns of aromatic residues and the orientation of their side chains, which are found more frequently in integral outer membrane proteins. May act in both early periplasmic and late outer membrane-associated steps of protein maturation. The chain is Chaperone SurA from Photobacterium profundum (strain SS9).